Here is a 107-residue protein sequence, read N- to C-terminus: Flagellar transcriptional regulator FlhD (107 aa).

The protein belongs to the FlhD family. Homodimer; disulfide-linked. Forms a heterohexamer composed of two FlhC and four FlhD subunits. Each FlhC binds a FlhD dimer, forming a heterotrimer, and a hexamer assembles by dimerization of two heterotrimers.

Its subcellular location is the cytoplasm. In terms of biological role, functions in complex with FlhC as a master transcriptional regulator that regulates transcription of several flagellar and non-flagellar operons by binding to their promoter region. Activates expression of class 2 flagellar genes, including fliA, which is a flagellum-specific sigma factor that turns on the class 3 genes. Also regulates genes whose products function in a variety of physiological pathways. In Bordetella bronchiseptica (strain ATCC BAA-588 / NCTC 13252 / RB50) (Alcaligenes bronchisepticus), this protein is Flagellar transcriptional regulator FlhD.